The sequence spans 875 residues: Alanine--tRNA ligase (875 aa).

Zn(2+) contacts are provided by H565, H569, C666, and H670.

The protein belongs to the class-II aminoacyl-tRNA synthetase family. The cofactor is Zn(2+).

The protein localises to the cytoplasm. The catalysed reaction is tRNA(Ala) + L-alanine + ATP = L-alanyl-tRNA(Ala) + AMP + diphosphate. Its function is as follows. Catalyzes the attachment of alanine to tRNA(Ala) in a two-step reaction: alanine is first activated by ATP to form Ala-AMP and then transferred to the acceptor end of tRNA(Ala). Also edits incorrectly charged Ser-tRNA(Ala) and Gly-tRNA(Ala) via its editing domain. The chain is Alanine--tRNA ligase from Leptothrix cholodnii (strain ATCC 51168 / LMG 8142 / SP-6) (Leptothrix discophora (strain SP-6)).